The chain runs to 296 residues: Ribosomal RNA small subunit methyltransferase A (296 aa).

The S-adenosyl-L-methionine site is built by asparagine 32, leucine 34, glycine 59, glutamate 80, aspartate 105, and asparagine 130.

Belongs to the class I-like SAM-binding methyltransferase superfamily. rRNA adenine N(6)-methyltransferase family. RsmA subfamily.

It localises to the cytoplasm. It catalyses the reaction adenosine(1518)/adenosine(1519) in 16S rRNA + 4 S-adenosyl-L-methionine = N(6)-dimethyladenosine(1518)/N(6)-dimethyladenosine(1519) in 16S rRNA + 4 S-adenosyl-L-homocysteine + 4 H(+). Its function is as follows. Specifically dimethylates two adjacent adenosines (A1518 and A1519) in the loop of a conserved hairpin near the 3'-end of 16S rRNA in the 30S particle. May play a critical role in biogenesis of 30S subunits. The chain is Ribosomal RNA small subunit methyltransferase A from Lactiplantibacillus plantarum (strain ATCC BAA-793 / NCIMB 8826 / WCFS1) (Lactobacillus plantarum).